We begin with the raw amino-acid sequence, 215 residues long: MVKVKICGVKKLESALQLDGLVDYIGFVHSLLGGPRSVPLEAARIMASQIEKSKTVLVVHGSSPSYAAAAADGFDVLQYHEPLLPSSAASLQATLDPLGVTLAVVVEYTGSAWKPQEPCGYINELNKEGVEPEYILLDTTKGLRDRIPLNEAAKASRCSHRVGLAGGLTPRDACKAVETGVSLIDVSRGVETGVPGVKDPLLSAELIMGAKRCSS.

It belongs to the TrpF family.

It carries out the reaction N-(5-phospho-beta-D-ribosyl)anthranilate = 1-(2-carboxyphenylamino)-1-deoxy-D-ribulose 5-phosphate. It participates in amino-acid biosynthesis; L-tryptophan biosynthesis; L-tryptophan from chorismate: step 3/5. This chain is N-(5'-phosphoribosyl)anthranilate isomerase (trpF), found in Aeropyrum pernix (strain ATCC 700893 / DSM 11879 / JCM 9820 / NBRC 100138 / K1).